We begin with the raw amino-acid sequence, 658 residues long: DNA-binding protein Rfx5 (658 aa).

Residues 1 to 10 (MAEDKPDAKS) show a composition bias toward basic and acidic residues. The tract at residues 1–28 (MAEDKPDAKSPKTGARPQGGADAGEPTT) is disordered. N-acetylalanine is present on Ala2. A Phosphoserine modification is found at Ser10. The N-terminal domain stretch occupies residues 24-89 (GEPTTLLQRL…PSLLSNEEYM (66 aa)). The leucine-rich region; critical for dimer formation and for interaction with RFXAP stretch occupies residues 61–65 (LYLYL). Positions 91 to 167 (AYRWIRNHLE…YCYSGIRRKT (77 aa)) form a DNA-binding region, RFX-type winged-helix. The short motif at 172–177 (PPLPGL) is the PxLPxI/L motif; mediates interaction with RFXANK element. The residue at position 184 (Ser184) is a Phosphoserine. Disordered stretches follow at residues 250-315 (LAEE…SSVP), 382-422 (AGPG…GLGA), 443-602 (VPPR…DKIP), and 624-658 (KGEADAATQGNKGLKGRVLQSSLTPEHKDPKATPP). Positions 277–309 (GPKKPERPAQPPKEQEARAGTDLPGRAERKKSV) are enriched in basic and acidic residues. Gly residues-rich tracts occupy residues 382-398 (AGPGPGPGLGPRFGPGP) and 406-422 (PGLGAGLGPGLGPGLGA). Basic and acidic residues-rich tracts occupy residues 465 to 476 (PRPHDKGIKRTA) and 489 to 498 (PVKEMKHETQ). The span at 506-516 (KRKRGRPRKKP) shows a compositional bias: basic residues. Residues 648-658 (PEHKDPKATPP) are compositionally biased toward basic and acidic residues.

Belongs to the RFX family. In terms of assembly, homodimer. The RFX heterotetrameric complex consists of 2 molecules of RFX5 and one each of RFXAP and RFX-B/RFXANK; with each subunit representing a separate complementation group. Interacts (via PxLPxI/L motif) with RFXANK (via ankyrin repeats); the interaction is direct. RFX forms cooperative DNA binding complexes with X2BP and CBF/NF-Y. RFX associates with CIITA to form an active transcriptional complex. Phosphorylated.

The protein localises to the nucleus. Activates transcription from class II MHC promoters. Recognizes X-boxes. Mediates cooperative binding between RFX and NF-Y. RFX binds the X1 box of MHC-II promoters. This is DNA-binding protein Rfx5 (Rfx5) from Mus musculus (Mouse).